The following is an 89-amino-acid chain: Arminin 7519 (89 aa).

Positions 1 to 18 are cleaved as a signal peptide; the sequence is MRSTFAVLFLALIALTYS. A propeptide spanning residues 19 to 59 is cleaved from the precursor; the sequence is KNYQDVKEEIKNEVENEILRDLGEDDDELDDNAQEAVNDAR. At alanine 86 the chain carries Alanine amide.

This sequence belongs to the arminin family. Expressed in entodermal epithelium along the body column.

It is found in the secreted. Its subcellular location is the target cell membrane. In terms of biological role, antimicrobial peptide with a broad-spectrum antimicrobial activity. Keeps its antibacterial activity under a wide range of salt concentrations that mimic physiological conditions of human blood, which is surprising, since Hydra is an obligate freshwater animal with nearly no salt tolerance. Does not affect red blood cells. The chain is Arminin 7519 from Hydra vulgaris (Hydra).